The chain runs to 357 residues: Dual-specificity RNA methyltransferase RlmN (357 aa).

Residue E89 is the Proton acceptor of the active site. Residues 109 to 340 form the Radical SAM core domain; the sequence is EGEKYTVCVS…CTIRESKALD (232 aa). C116 and C345 form a disulfide bridge. Positions 123, 127, and 130 each coordinate [4Fe-4S] cluster. S-adenosyl-L-methionine contacts are provided by residues 173-174, S203, 226-228, and N302; these read GE and SLH. C345 functions as the S-methylcysteine intermediate in the catalytic mechanism.

This sequence belongs to the radical SAM superfamily. RlmN family. The cofactor is [4Fe-4S] cluster.

It localises to the cytoplasm. It catalyses the reaction adenosine(2503) in 23S rRNA + 2 reduced [2Fe-2S]-[ferredoxin] + 2 S-adenosyl-L-methionine = 2-methyladenosine(2503) in 23S rRNA + 5'-deoxyadenosine + L-methionine + 2 oxidized [2Fe-2S]-[ferredoxin] + S-adenosyl-L-homocysteine. It carries out the reaction adenosine(37) in tRNA + 2 reduced [2Fe-2S]-[ferredoxin] + 2 S-adenosyl-L-methionine = 2-methyladenosine(37) in tRNA + 5'-deoxyadenosine + L-methionine + 2 oxidized [2Fe-2S]-[ferredoxin] + S-adenosyl-L-homocysteine. Functionally, specifically methylates position 2 of adenine 2503 in 23S rRNA and position 2 of adenine 37 in tRNAs. m2A2503 modification seems to play a crucial role in the proofreading step occurring at the peptidyl transferase center and thus would serve to optimize ribosomal fidelity. The chain is Dual-specificity RNA methyltransferase RlmN from Helicobacter pylori (strain G27).